Here is a 353-residue protein sequence, read N- to C-terminus: Histidinol-phosphate aminotransferase (353 aa).

The residue at position 214 (lysine 214) is an N6-(pyridoxal phosphate)lysine.

This sequence belongs to the class-II pyridoxal-phosphate-dependent aminotransferase family. Histidinol-phosphate aminotransferase subfamily. Homodimer. Pyridoxal 5'-phosphate is required as a cofactor.

The catalysed reaction is L-histidinol phosphate + 2-oxoglutarate = 3-(imidazol-4-yl)-2-oxopropyl phosphate + L-glutamate. It functions in the pathway amino-acid biosynthesis; L-histidine biosynthesis; L-histidine from 5-phospho-alpha-D-ribose 1-diphosphate: step 7/9. This chain is Histidinol-phosphate aminotransferase, found in Gloeobacter violaceus (strain ATCC 29082 / PCC 7421).